The following is a 271-amino-acid chain: Dirigent protein 17 (271 aa).

A compositionally biased stretch (polar residues) spans 1 to 12; the sequence is MEDTGSIKQEAQ. Residues 1–22 are disordered; the sequence is MEDTGSIKQEAQSHPPGIFEIP. An N-linked (GlcNAc...) asparagine glycan is attached at asparagine 255.

Belongs to the plant dirigent protein family. Homodimer.

Its subcellular location is the secreted. It localises to the extracellular space. The protein resides in the apoplast. Dirigent proteins impart stereoselectivity on the phenoxy radical-coupling reaction, yielding optically active lignans from two molecules of coniferyl alcohol in the biosynthesis of lignans, flavonolignans, and alkaloids and thus plays a central role in plant secondary metabolism. This is Dirigent protein 17 (DIR17) from Arabidopsis thaliana (Mouse-ear cress).